Consider the following 359-residue polypeptide: 3-isopropylmalate dehydrogenase (359 aa).

An NAD(+)-binding site is contributed by 74–85 (GPKWGTGSVRPE). Residues arginine 92, arginine 102, arginine 131, and aspartate 220 each contribute to the substrate site. Mg(2+) is bound by residues aspartate 220, aspartate 245, and aspartate 249. An NAD(+)-binding site is contributed by 284–295 (GSAPDLPANKVN).

This sequence belongs to the isocitrate and isopropylmalate dehydrogenases family. Homodimer. Mg(2+) serves as cofactor. It depends on Mn(2+) as a cofactor.

The protein localises to the cytoplasm. The enzyme catalyses (2R,3S)-3-isopropylmalate + NAD(+) = 4-methyl-2-oxopentanoate + CO2 + NADH. It functions in the pathway amino-acid biosynthesis; L-leucine biosynthesis; L-leucine from 3-methyl-2-oxobutanoate: step 3/4. Catalyzes the oxidation of 3-carboxy-2-hydroxy-4-methylpentanoate (3-isopropylmalate) to 3-carboxy-4-methyl-2-oxopentanoate. The product decarboxylates to 4-methyl-2 oxopentanoate. In Kluyveromyces marxianus (Yeast), this protein is 3-isopropylmalate dehydrogenase (LEU2).